A 957-amino-acid chain; its full sequence is Translation initiation factor IF-2 (957 aa).

Disordered regions lie at residues Lys-34 to Lys-282 and Ser-311 to Gly-367. A compositionally biased stretch (pro residues) spans Pro-107–Arg-161. Over residues Thr-163–Gly-188 the composition is skewed to basic and acidic residues. Over residues Pro-209 to Pro-242 the composition is skewed to pro residues. Basic and acidic residues-rich tracts occupy residues Leu-250–Ile-259 and Lys-266–Arg-275. A tr-type G domain is found at Arg-444–Tyr-617. The interval Gly-453–Thr-460 is G1. GTP is bound at residue Gly-453–Thr-460. Residues Gly-478–His-482 form a G2 region. Residues Asp-503–Gly-506 are G3. GTP contacts are provided by residues Asp-503 to His-507 and Asn-557 to Asp-560. The tract at residues Asn-557–Asp-560 is G4. The tract at residues Ser-593 to Leu-595 is G5.

It belongs to the TRAFAC class translation factor GTPase superfamily. Classic translation factor GTPase family. IF-2 subfamily.

It is found in the cytoplasm. Functionally, one of the essential components for the initiation of protein synthesis. Protects formylmethionyl-tRNA from spontaneous hydrolysis and promotes its binding to the 30S ribosomal subunits. Also involved in the hydrolysis of GTP during the formation of the 70S ribosomal complex. This chain is Translation initiation factor IF-2, found in Thermosynechococcus vestitus (strain NIES-2133 / IAM M-273 / BP-1).